Here is a 381-residue protein sequence, read N- to C-terminus: S-adenosylmethionine synthase (381 aa).

An ATP-binding site is contributed by histidine 15. Aspartate 17 is a Mg(2+) binding site. A K(+)-binding site is contributed by glutamate 43. Positions 56 and 99 each coordinate L-methionine. Residues glutamine 99–arginine 109 are flexible loop. Residues aspartate 164–lysine 166, arginine 230–phenylalanine 231, aspartate 239, arginine 245–lysine 246, alanine 262, and lysine 266 contribute to the ATP site. L-methionine is bound at residue aspartate 239. Position 270 (lysine 270) interacts with L-methionine.

It belongs to the AdoMet synthase family. As to quaternary structure, homotetramer; dimer of dimers. It depends on Mg(2+) as a cofactor. The cofactor is K(+).

It is found in the cytoplasm. It carries out the reaction L-methionine + ATP + H2O = S-adenosyl-L-methionine + phosphate + diphosphate. It functions in the pathway amino-acid biosynthesis; S-adenosyl-L-methionine biosynthesis; S-adenosyl-L-methionine from L-methionine: step 1/1. Its function is as follows. Catalyzes the formation of S-adenosylmethionine (AdoMet) from methionine and ATP. The overall synthetic reaction is composed of two sequential steps, AdoMet formation and the subsequent tripolyphosphate hydrolysis which occurs prior to release of AdoMet from the enzyme. This Alteromonas mediterranea (strain DSM 17117 / CIP 110805 / LMG 28347 / Deep ecotype) protein is S-adenosylmethionine synthase.